The following is a 485-amino-acid chain: Glutamate--tRNA ligase (485 aa).

The 'HIGH' region signature appears at 11 to 21 (PSPTGLLHIGN). Positions 255-259 (KLSKR) match the 'KMSKS' region motif. Lysine 258 contacts ATP.

It belongs to the class-I aminoacyl-tRNA synthetase family. Glutamate--tRNA ligase type 1 subfamily. As to quaternary structure, monomer.

The protein localises to the cytoplasm. The catalysed reaction is tRNA(Glu) + L-glutamate + ATP = L-glutamyl-tRNA(Glu) + AMP + diphosphate. Functionally, catalyzes the attachment of glutamate to tRNA(Glu) in a two-step reaction: glutamate is first activated by ATP to form Glu-AMP and then transferred to the acceptor end of tRNA(Glu). The chain is Glutamate--tRNA ligase from Streptococcus mutans serotype c (strain ATCC 700610 / UA159).